A 678-amino-acid polypeptide reads, in one-letter code: DNA ligase (678 aa).

Residues 34–38 (DSEYD), 83–84 (SL), and Glu114 each bind NAD(+). Lys116 serves as the catalytic N6-AMP-lysine intermediate. NAD(+)-binding residues include Arg137, Glu176, Lys293, and Lys317. Zn(2+) contacts are provided by Cys411, Cys414, Cys429, and Cys435. Positions 594–678 (PTRQPLNGES…LMAGYGQTLS (85 aa)) constitute a BRCT domain.

The protein belongs to the NAD-dependent DNA ligase family. LigA subfamily. Requires Mg(2+) as cofactor. The cofactor is Mn(2+).

It carries out the reaction NAD(+) + (deoxyribonucleotide)n-3'-hydroxyl + 5'-phospho-(deoxyribonucleotide)m = (deoxyribonucleotide)n+m + AMP + beta-nicotinamide D-nucleotide.. Functionally, DNA ligase that catalyzes the formation of phosphodiester linkages between 5'-phosphoryl and 3'-hydroxyl groups in double-stranded DNA using NAD as a coenzyme and as the energy source for the reaction. It is essential for DNA replication and repair of damaged DNA. The polypeptide is DNA ligase (Acinetobacter baumannii (strain AB307-0294)).